Reading from the N-terminus, the 440-residue chain is Protein OSB3, chloroplastic/mitochondrial (440 aa).

A chloroplast and mitochondrion-targeting transit peptide spans 1–61; it reads MNLISRTLTR…AKVSVKPPLN (61 aa). One can recognise an SSB domain in the interval 80–178; the sequence is ISNWINLIGF…VMVQNLNFVQ (99 aa). 3 PDF region regions span residues 218–270, 294–342, and 380–428; these read WKHL…LKLE, WKDL…SKLP, and WKNL…SKLP.

Expressed primarily in the female gametophyte and in the floral abscission zone.

The protein localises to the mitochondrion. Its subcellular location is the plastid. It is found in the chloroplast. Functionally, binds single-stranded DNA. This is Protein OSB3, chloroplastic/mitochondrial (OSB3) from Arabidopsis thaliana (Mouse-ear cress).